Reading from the N-terminus, the 276-residue chain is Release factor glutamine methyltransferase (276 aa).

S-adenosyl-L-methionine contacts are provided by residues 116 to 120 (GTGTG), aspartate 139, tryptophan 167, and asparagine 182. Position 182 to 185 (182 to 185 (NPPY)) interacts with substrate.

It belongs to the protein N5-glutamine methyltransferase family. PrmC subfamily.

The catalysed reaction is L-glutaminyl-[peptide chain release factor] + S-adenosyl-L-methionine = N(5)-methyl-L-glutaminyl-[peptide chain release factor] + S-adenosyl-L-homocysteine + H(+). Its function is as follows. Methylates the class 1 translation termination release factors RF1/PrfA and RF2/PrfB on the glutamine residue of the universally conserved GGQ motif. This chain is Release factor glutamine methyltransferase, found in Pseudomonas aeruginosa (strain ATCC 15692 / DSM 22644 / CIP 104116 / JCM 14847 / LMG 12228 / 1C / PRS 101 / PAO1).